A 382-amino-acid chain; its full sequence is Cell division protein DivIB (382 aa).

Residues 1 to 103 (MAKDKEKQSD…SATQIAFQKS (103 aa)) lie on the Cytoplasmic side of the membrane. 2 stretches are compositionally biased toward basic and acidic residues: residues 36 to 49 (EKKL…DKKA) and 60 to 70 (VELKTDEKTDS). A disordered region spans residues 36-92 (EKKLKEKLLSDKKAQQQAQNASEAVELKTDEKTDSQEIESETTSKPKKTKKVRQPKE). A helical membrane pass occupies residues 104–124 (LPVLLGALLLMAVSIFMITPY). In terms of domain architecture, POTRA spans 125–196 (SKKKEFSVRG…NHFLFNVIEF (72 aa)). The Extracellular portion of the chain corresponds to 125–382 (SKKKEFSVRG…PETVLEQAHG (258 aa)). A disordered region spans residues 322 to 382 (QEIENQPEVP…PETVLEQAHG (61 aa)). Positions 338 to 352 (AADKEGDKPGEHQEQ) are enriched in basic and acidic residues.

The protein belongs to the FtsQ/DivIB family. DivIB subfamily.

Its subcellular location is the cell membrane. Cell division protein that may be involved in stabilizing or promoting the assembly of the division complex. This is Cell division protein DivIB from Streptococcus pyogenes serotype M2 (strain MGAS10270).